Consider the following 715-residue polypeptide: Polyribonucleotide nucleotidyltransferase (715 aa).

Mg(2+) is bound by residues Asp-488 and Asp-494. Residues 555–614 (PRIEVMHIPTDKIRDVIGTGGKVIREIVEKTGAKINIEDDGTVKIASSNGKEIEAARKWI) form the KH domain. Residues 624–692 (GEIYEGTVVK…ERGKVRLSMK (69 aa)) form the S1 motif domain.

It belongs to the polyribonucleotide nucleotidyltransferase family. The cofactor is Mg(2+).

The protein resides in the cytoplasm. The catalysed reaction is RNA(n+1) + phosphate = RNA(n) + a ribonucleoside 5'-diphosphate. Functionally, involved in mRNA degradation. Catalyzes the phosphorolysis of single-stranded polyribonucleotides processively in the 3'- to 5'-direction. This Chelativorans sp. (strain BNC1) protein is Polyribonucleotide nucleotidyltransferase.